The chain runs to 235 residues: Probable transcriptional regulatory protein Cla_1081 (235 aa).

It belongs to the TACO1 family.

The protein localises to the cytoplasm. The polypeptide is Probable transcriptional regulatory protein Cla_1081 (Campylobacter lari (strain RM2100 / D67 / ATCC BAA-1060)).